Reading from the N-terminus, the 448-residue chain is N-succinylarginine dihydrolase (448 aa).

Residues 19–28 (AGLSSGNIAS), asparagine 110, and 137–138 (HR) each bind substrate. Glutamate 174 is a catalytic residue. Arginine 216 provides a ligand contact to substrate. Residue histidine 252 is part of the active site. Positions 254 and 366 each coordinate substrate. Cysteine 372 serves as the catalytic Nucleophile.

It belongs to the succinylarginine dihydrolase family. As to quaternary structure, homodimer.

The enzyme catalyses N(2)-succinyl-L-arginine + 2 H2O + 2 H(+) = N(2)-succinyl-L-ornithine + 2 NH4(+) + CO2. It participates in amino-acid degradation; L-arginine degradation via AST pathway; L-glutamate and succinate from L-arginine: step 2/5. Functionally, catalyzes the hydrolysis of N(2)-succinylarginine into N(2)-succinylornithine, ammonia and CO(2). This is N-succinylarginine dihydrolase from Legionella pneumophila (strain Paris).